The following is a 1033-amino-acid chain: PDZ domain-containing protein 7 (1033 aa).

PDZ domains are found at residues 86–168 and 210–293; these read SVRV…RMGR and IVHL…ETGR. Residues 323–344 are compositionally biased toward low complexity; it reads ESSSSVSSCASSAPYSSGSLPS. Disordered stretches follow at residues 323-380, 444-464, 754-864, and 943-1033; these read ESSS…GGRV, KQQRKKEKSGSPGEKGALQRS, EPLS…KTVT, and MELV…PRIP. Basic residues predominate over residues 770 to 784; sequence AQSRSRSRSRSRSRS. Residues 785-797 are compositionally biased toward low complexity; it reads SRGQGKSPGRRSP. The PDZ 3 domain occupies 862-934; sequence TVTLSKMKQS…QRAVDTIRRA (73 aa). Residues 991–1000 are compositionally biased toward pro residues; it reads PEPPTNPQTP.

In terms of assembly, homodimerizes (via PDZ2 domain). Component of USH2 complex, composed of ADGRV1, PDZD7, USH2A and WHRN. Interacts (via PDZ domains) with WHRN; the interaction is direct. Interacts with USH1G. Interacts with ADGRV1 (via the cytoplasmic region). Interacts with USH2A (via the cytoplasmic region). Interacts with MYO7A (via MyTH4-FERM domains). Weakly expressed in the inner ear. Expressed in the retinal pigment epithelium.

The protein resides in the cell projection. It is found in the cilium. The protein localises to the nucleus. It localises to the stereocilium. In terms of biological role, in cochlear developing hair cells, essential in organizing the USH2 complex at stereocilia ankle links. Blocks inhibition of adenylate cyclase activity mediated by ADGRV1. The polypeptide is PDZ domain-containing protein 7 (Homo sapiens (Human)).